The sequence spans 317 residues: Malate dehydrogenase (317 aa).

NAD(+) contacts are provided by residues 7–13 (GAAGGIG) and Asp-34. Substrate contacts are provided by Arg-81 and Arg-87. NAD(+) contacts are provided by residues Asn-94 and 117–119 (VTN). The substrate site is built by Asn-119 and Arg-153. Residue His-177 is the Proton acceptor of the active site. Met-231 lines the NAD(+) pocket.

It belongs to the LDH/MDH superfamily. MDH type 1 family. In terms of assembly, homodimer.

It catalyses the reaction (S)-malate + NAD(+) = oxaloacetate + NADH + H(+). In terms of biological role, catalyzes the reversible oxidation of malate to oxaloacetate. This Actinobacillus pleuropneumoniae serotype 5b (strain L20) protein is Malate dehydrogenase.